Consider the following 179-residue polypeptide: Large ribosomal subunit protein uL5 (179 aa).

The protein belongs to the universal ribosomal protein uL5 family. Part of the 50S ribosomal subunit; part of the 5S rRNA/L5/L18/L25 subcomplex. Contacts the 5S rRNA and the P site tRNA. Forms a bridge to the 30S subunit in the 70S ribosome.

Its function is as follows. This is one of the proteins that bind and probably mediate the attachment of the 5S RNA into the large ribosomal subunit, where it forms part of the central protuberance. In the 70S ribosome it contacts protein S13 of the 30S subunit (bridge B1b), connecting the 2 subunits; this bridge is implicated in subunit movement. Contacts the P site tRNA; the 5S rRNA and some of its associated proteins might help stabilize positioning of ribosome-bound tRNAs. The protein is Large ribosomal subunit protein uL5 of Prochlorococcus marinus (strain NATL1A).